The primary structure comprises 190 residues: MAGSRLETVGSIFSRTRDLVRAGVLKEKPLWFDVYDAFPPLREPVFQRPRVRYGKAKAPIQDIWYHEDRIRAKFYSVYGSGQRAFDLFNPNFKSTCQRFVEKYTELQKLGETDEEKLFVETGKALLAEGVILRRVGEARTQHGGSHVSRKSEHLSVRPQTALEENETQKEVPQDQHLEAPADQSKGLLPP.

Alanine 2 is subject to N-acetylalanine. Lysine 102 is modified (N6-acetyllysine). The disordered stretch occupies residues 139–190 (RTQHGGSHVSRKSEHLSVRPQTALEENETQKEVPQDQHLEAPADQSKGLLPP). The span at 166 to 179 (ETQKEVPQDQHLEA) shows a compositional bias: basic and acidic residues.

Belongs to the mitochondrion-specific ribosomal protein mS23 family. In terms of assembly, component of the mitochondrial small ribosomal subunit (mt-SSU). Mature mammalian 55S mitochondrial ribosomes consist of a small (28S) and a large (39S) subunit. The 28S small subunit contains a 12S ribosomal RNA (12S mt-rRNA) and 30 different proteins. The 39S large subunit contains a 16S rRNA (16S mt-rRNA), a copy of mitochondrial valine transfer RNA (mt-tRNA(Val)), which plays an integral structural role, and 52 different proteins.

Its subcellular location is the mitochondrion. The protein is Small ribosomal subunit protein mS23 (MRPS23) of Homo sapiens (Human).